Reading from the N-terminus, the 65-residue chain is MRTFLFLFVVLFFLTPAKNAFFDDKCDKLRGTCKNSCEKNEELTSFCQKSLKCCRTIQTCGNTTD.

The N-terminal stretch at 1-20 (MRTFLFLFVVLFFLTPAKNA) is a signal peptide. Intrachain disulfides connect cysteine 26–cysteine 53, cysteine 33–cysteine 47, and cysteine 37–cysteine 54.

It belongs to the beta-defensin family. In terms of assembly, monomer. Interacts with CCR2 (via extracellular N-terminal region); this interaction may preferentially require specific tyrosine sulfation on CCR2.

The protein localises to the secreted. The protein resides in the membrane. Has antibacterial activity. Acts as a ligand for C-C chemokine receptor CCR2. The sequence is that of Beta-defensin 106A (DEFB106A) from Hylobates lar (Lar gibbon).